The following is a 358-amino-acid chain: Trace amine-associated receptor 7f (358 aa).

At 1 to 47 (MSIADETVSWNQDSILSRDLFSATSAELCYENLNRSCVRSPYSPGPR) the chain is on the extracellular side. The N-linked (GlcNAc...) asparagine glycan is linked to Asn-34. 2 disulfide bridges follow: Cys-37-Cys-201 and Cys-120-Cys-205. The helical transmembrane segment at 48-68 (LILYAVFGFGAVLAVCGNLLV) threads the bilayer. The Cytoplasmic segment spans residues 69 to 83 (MTSILHFRQLHSPAN). Residues 84 to 104 (FLVASLACADFLVGVMVMPFS) traverse the membrane as a helical segment. Topologically, residues 105 to 121 (MVRSVEGCWYFGDSYCK) are extracellular. Residues 122-143 (LHTCFDVSFCYCSLFHLCFISV) traverse the membrane as a helical segment. The Cytoplasmic segment spans residues 144–166 (DRYIAVSDPLAYPTRFTASVSGK). Residues 167 to 187 (CITFSWLLSISYGFSLIYTGA) traverse the membrane as a helical segment. The Extracellular segment spans residues 188–212 (SEAGLEDLVSSLTCVGGCQIAVNQT). Asn-210 is a glycosylation site (N-linked (GlcNAc...) asparagine). The helical transmembrane segment at 213-233 (WVFINFSVFLIPTLVMITVYS) threads the bilayer. At 234 to 274 (KIFLIAKQQAQNIEKMSKQTARASDSYKDRVAKRERKAAKT) the chain is on the cytoplasmic side. Residues 275 to 295 (LGIAVAAFLLSWLPYFIDSFI) traverse the membrane as a helical segment. Topologically, residues 296-309 (DAFLGFITPTYVYE) are extracellular. The helical transmembrane segment at 310–333 (ILVWIVYYNSAMNPLIYAFFYPWF) threads the bilayer. The Cytoplasmic segment spans residues 334 to 358 (RKAIKLTVTGKILRENSSTTNLFSE).

This sequence belongs to the G-protein coupled receptor 1 family. In terms of tissue distribution, specifically expressed in neurons of the olfactory epithelium.

The protein resides in the cell membrane. Its function is as follows. Olfactory receptor activated by trace amines, such as N-methylpiperidine and N,N-dimethylcyclohexylamine. Trace amine compounds are enriched in animal body fluids and act on trace amine-associated receptors (TAARs) to elicit both intraspecific and interspecific innate behaviors. Ligand-binding causes a conformation change that triggers signaling via G(s)-class of G alpha proteins (GNAL or GNAS). In Mus musculus (Mouse), this protein is Trace amine-associated receptor 7f.